The following is a 49-amino-acid chain: Feruloyl esterase A (49 aa).

Belongs to the AB hydrolase superfamily. FaeA family.

It localises to the secreted. It carries out the reaction feruloyl-polysaccharide + H2O = ferulate + polysaccharide.. Involved in degradation of plant cell walls. Hydrolyzes the feruloyl-arabinose ester bond in arabinoxylans as well as the feruloyl-galactose and feruloyl-arabinose ester bonds in pectin. Active against methyl esters of sinapate (MSA), but not caffeate (MCA). The polypeptide is Feruloyl esterase A (Talaromyces stipitatus (strain ATCC 10500 / CBS 375.48 / QM 6759 / NRRL 1006) (Penicillium stipitatum)).